The primary structure comprises 368 residues: Flavanone 3-dioxygenase (368 aa).

Positions 191 to 295 constitute a Fe2OG dioxygenase domain; sequence CVDMDQKVIV…RMSIATFQNP (105 aa). Fe cation is bound by residues H218, D220, and H276. R286 is a 2-oxoglutarate binding site.

This sequence belongs to the iron/ascorbate-dependent oxidoreductase family. Fe(2+) serves as cofactor. The cofactor is L-ascorbate.

It carries out the reaction a (2S)-flavan-4-one + 2-oxoglutarate + O2 = a (2R,3R)-dihydroflavonol + succinate + CO2. Its pathway is secondary metabolite biosynthesis; flavonoid biosynthesis. In terms of biological role, involved in the conversion of (2S)-naringenin to (+)-(2R/3R)-dihydrokaempferol. In Petroselinum crispum (Parsley), this protein is Flavanone 3-dioxygenase (FHT).